We begin with the raw amino-acid sequence, 693 residues long: Glycine--tRNA ligase beta subunit (693 aa).

This sequence belongs to the class-II aminoacyl-tRNA synthetase family. As to quaternary structure, tetramer of two alpha and two beta subunits.

The protein localises to the cytoplasm. It catalyses the reaction tRNA(Gly) + glycine + ATP = glycyl-tRNA(Gly) + AMP + diphosphate. In Vibrio vulnificus (strain CMCP6), this protein is Glycine--tRNA ligase beta subunit.